Consider the following 347-residue polypeptide: Ion-translocating oxidoreductase complex subunit D (347 aa).

The next 4 membrane-spanning stretches (helical) occupy residues 15 to 35 (IMFL…YFFG), 36 to 56 (IGTL…EIII), 84 to 104 (IPPL…IVVA), and 114 to 134 (NIFN…PVYM). Position 182 is an FMN phosphoryl threonine (threonine 182). Helical transmembrane passes span 217-237 (CINI…IICW), 239-259 (IPIS…FYSK), 261-281 (LFMS…AFFI), 289-309 (ACNN…VWII), and 315-335 (YPDA…LVDY).

Belongs to the NqrB/RnfD family. In terms of assembly, the complex is composed of six subunits: RnfA, RnfB, RnfC, RnfD, RnfE and RnfG. It depends on FMN as a cofactor.

The protein resides in the cell inner membrane. In terms of biological role, part of a membrane-bound complex that couples electron transfer with translocation of ions across the membrane. This chain is Ion-translocating oxidoreductase complex subunit D, found in Buchnera aphidicola subsp. Acyrthosiphon pisum (strain 5A).